A 1173-amino-acid chain; its full sequence is Tectonin beta-propeller repeat-containing protein 1 (1173 aa).

TECPR repeat units follow at residues 209 to 240 (LSVW…TELE), 254 to 285 (DLLW…TIVE), 301 to 332 (NVVW…IEMV), and 344 to 376 (DQVF…KSIV). The segment at 403–489 (IKEHSDSPIP…AGPVPKAGAP (87 aa)) is disordered. A compositionally biased stretch (low complexity) spans 409-422 (SPIPSDIESSSEPE). Polar residues predominate over residues 424–434 (SAVQENSSDSS). The region spanning 609–718 (VWVKTGALQW…WLVLLSMSCY (110 aa)) is the PH domain. TECPR repeat units lie at residues 730–757 (QAIW…TNGR), 952–983 (IALW…LHVG), 997–1028 (LQVW…YHIP), 1043–1074 (TSVF…EHMS), and 1086–1126 (DQIW…DYGI). Residues 1147–1173 (QPKENATEKPDPQEENGESAFSHIANC) form a disordered region.

It belongs to the TECPR1 family.

The protein resides in the cytoplasmic vesicle. Its subcellular location is the autophagosome membrane. The protein localises to the lysosome membrane. Functionally, tethering factor involved in autophagy. Involved in autophagosome maturation by promoting the autophagosome fusion with lysosomes. Binds phosphatidylinositol-3-phosphate (PtdIns(3)P) present at the surface of autophagosomes. In Xenopus tropicalis (Western clawed frog), this protein is Tectonin beta-propeller repeat-containing protein 1 (tecpr1).